The chain runs to 323 residues: MGILSFLPVLATESDWADCKSPQPWGHMLLWTAVLFLAPVAGTPAAPPKAVLKLEPQWINVLQEDSVTLTCRGTHSPESDSIQWFHNGNLIPTHTQPSYRFKANNNDSGEYTCQTGQTSLSDPVHLTVLSEWLVLQTPHLEFQEGETIVLRCHSWKDKPLVKVTFFQNGKSKKFSRSDPNFSIPQANHSHSGDYHCTGNIGYTLYSSKPVTITVQAPSSSPMGIIVAVVTGIAVAAIVAAVVALIYCRKKRISANSTDPVKAAQFEPPGRQMIAIRKRQPEETNNDYETADGGYMTLNPRAPTDDDKNIYLTLPPNDHVNSNN.

The signal sequence occupies residues methionine 1–glycine 42. The Extracellular portion of the chain corresponds to threonine 43 to glycine 223. 2 consecutive Ig-like C2-type domains span residues proline 48–threonine 127 and glutamate 131–threonine 213. Disulfide bonds link cysteine 71–cysteine 113 and cysteine 152–cysteine 196. N-linked (GlcNAc...) asparagine glycosylation is found at asparagine 106, asparagine 180, and asparagine 187. Residues isoleucine 224 to tyrosine 246 form a helical membrane-spanning segment. At cysteine 247 to asparagine 323 the chain is on the cytoplasmic side. Positions lysine 277–asparagine 323 are disordered. A phosphotyrosine; by SRC-type Tyr-kinases mark is found at tyrosine 294 and tyrosine 310.

Post-translationally, phosphorylated by SRC-type Tyr-kinases such as LYN, BLK, FYN and SYK. As to expression, isoform IIC1 is detected in monocytes, macrophages, polymorphonuclear cells and natural killer cells.

The protein resides in the cytoplasm. Its subcellular location is the cell membrane. In terms of biological role, receptor for the Fc region of complexed immunoglobulins gamma. Low affinity receptor. Involved in a variety of effector and regulatory functions such as phagocytosis of immune complexes and modulation of antibody production by B-cells. The chain is Low affinity immunoglobulin gamma Fc region receptor II-c (FCGR2C) from Homo sapiens (Human).